Here is a 122-residue protein sequence, read N- to C-terminus: Large ribosomal subunit protein uL14 (122 aa).

It belongs to the universal ribosomal protein uL14 family. Part of the 50S ribosomal subunit. Forms a cluster with proteins L3 and L19. In the 70S ribosome, L14 and L19 interact and together make contacts with the 16S rRNA in bridges B5 and B8.

Binds to 23S rRNA. Forms part of two intersubunit bridges in the 70S ribosome. In Fusobacterium nucleatum subsp. nucleatum (strain ATCC 25586 / DSM 15643 / BCRC 10681 / CIP 101130 / JCM 8532 / KCTC 2640 / LMG 13131 / VPI 4355), this protein is Large ribosomal subunit protein uL14.